A 174-amino-acid chain; its full sequence is Secretory-abundant heat soluble protein 2 (174 aa).

A signal peptide spans 1–19; sequence MHRFVLALVVFAGAAIVWA. The tract at residues 30–60 is SAHS-c1; the sequence is EWTGKPWMGKWESDPSKDENVEEFKKKLQLP. The segment at 77 to 105 is SAHS-c2; it reads YKKGDEYHHKIIINDAHYKNDIVFKLGQE. An N-linked (GlcNAc...) asparagine glycan is attached at Asn111. An SAHS-c3 region spans residues 118–172; it reads KYEDKDGALVGSVHYTGTKEQSLDKTINNVFKLEGDHLVKTSTIEGVTMKRHYNK.

It belongs to the Secretory-abundant heat soluble protein (SAHS) family.

The protein localises to the secreted. In terms of biological role, secreted heat soluble protein acting as a molecular shield in water-deficient condition. Tardigrade-specific intrinsically disordered proteins (TDPs) are essential for desiccation tolerance by forming non-crystalline amorphous solids upon desiccation, and this vitrified state mirrors their protective capabilities. The sequence is that of Secretory-abundant heat soluble protein 2 from Ramazzottius varieornatus (Water bear).